The primary structure comprises 822 residues: Endonuclease MutS2 (822 aa).

Residue 348–355 (GPNTGGKT) coordinates ATP. Positions 707–737 (SLNGKKVEPPPKSEPVPKKVKAEPPATEAKS) are disordered. A compositionally biased stretch (basic and acidic residues) spans 709-728 (NGKKVEPPPKSEPVPKKVKA). The 74-residue stretch at 749–822 (LDCRGDRLER…GAGVTIAYLR (74 aa)) folds into the Smr domain.

Belongs to the DNA mismatch repair MutS family. MutS2 subfamily. As to quaternary structure, homodimer. Binds to stalled ribosomes, contacting rRNA.

Endonuclease that is involved in the suppression of homologous recombination and thus may have a key role in the control of bacterial genetic diversity. In terms of biological role, acts as a ribosome collision sensor, splitting the ribosome into its 2 subunits. Detects stalled/collided 70S ribosomes which it binds and splits by an ATP-hydrolysis driven conformational change. Acts upstream of the ribosome quality control system (RQC), a ribosome-associated complex that mediates the extraction of incompletely synthesized nascent chains from stalled ribosomes and their subsequent degradation. Probably generates substrates for RQC. This chain is Endonuclease MutS2, found in Synechocystis sp. (strain ATCC 27184 / PCC 6803 / Kazusa).